We begin with the raw amino-acid sequence, 97 residues long: Large ribosomal subunit protein bL28 (97 aa).

It belongs to the bacterial ribosomal protein bL28 family.

The chain is Large ribosomal subunit protein bL28 from Bartonella quintana (strain Toulouse) (Rochalimaea quintana).